Consider the following 1023-residue polypeptide: 2-oxoglutarate dehydrogenase complex component E1 (1023 aa).

The N-terminal 40 residues, 1-40 (MFHLRTCAAKLRPLTASQTVKTFSQNRPAAARTFQQIRCY), are a transit peptide targeting the mitochondrion. Position 74 is an N6-succinyllysine (lysine 74). Phosphoserine is present on serine 100. Residues histidine 143, aspartate 156, and aspartate 158 each coordinate Ca(2+). Arginine 312 contributes to the thiamine diphosphate binding site. Lysine 401 carries the N6-acetyllysine modification. Residues aspartate 411, asparagine 444, and isoleucine 446 each coordinate thiamine diphosphate. 3 residues coordinate Mg(2+): aspartate 411, asparagine 444, and isoleucine 446. Lysine 534 is covalently cross-linked (Glycyl lysine isopeptide (Lys-Gly) (interchain with G-Cter in ubiquitin)). The residue at position 564 (lysine 564) is an N6-succinyllysine. Glutamine 676 provides a ligand contact to thiamine diphosphate. Lysine 970 is subject to N6-acetyllysine.

The protein belongs to the alpha-ketoglutarate dehydrogenase family. Homodimer. The 2-oxoglutarate dehydrogenase complex is composed of OGDH (2-oxoglutarate dehydrogenase; E1), DLST (dihydrolipoamide succinyltransferase; E2), DLD (dihydrolipoamide dehydrogenase; E3) and the assembly factor KGD4. It contains multiple copies of the three enzymatic components (E1, E2 and E3). In the nucleus, the 2-oxoglutarate dehydrogenase complex associates with KAT2A. Interacts with ABHD11; this interaction maintains the functional lipoylation of the 2-oxoglutarate dehydrogenase complex. The cofactor is thiamine diphosphate. It depends on Mg(2+) as a cofactor.

The protein localises to the mitochondrion. The protein resides in the nucleus. The catalysed reaction is N(6)-[(R)-lipoyl]-L-lysyl-[protein] + 2-oxoglutarate + H(+) = N(6)-[(R)-S(8)-succinyldihydrolipoyl]-L-lysyl-[protein] + CO2. Its activity is regulated as follows. Calcium ions and ADP stimulate, whereas ATP and NADH reduce catalytic activity. Its function is as follows. 2-oxoglutarate dehydrogenase (E1o) component of the 2-oxoglutarate dehydrogenase complex (OGDHC). Participates in the first step, rate limiting for the overall conversion of 2-oxoglutarate to succinyl-CoA and CO(2) catalyzed by the whole OGDHC. Catalyzes the irreversible decarboxylation of 2-oxoglutarate (alpha-ketoglutarate) via the thiamine diphosphate (ThDP) cofactor and subsequent transfer of the decarboxylated acyl intermediate on an oxidized dihydrolipoyl group that is covalently amidated to the E2 enzyme (dihydrolipoyllysine-residue succinyltransferase or DLST). Plays a key role in the Krebs (citric acid) cycle, which is a common pathway for oxidation of fuel molecules, including carbohydrates, fatty acids, and amino acids. Can catalyze the decarboxylation of 2-oxoadipate in vitro, but at a much lower rate than 2-oxoglutarate. Mainly active in the mitochondrion. A fraction of the 2-oxoglutarate dehydrogenase complex also localizes in the nucleus and is required for lysine succinylation of histones: associates with KAT2A on chromatin and provides succinyl-CoA to histone succinyltransferase KAT2A. This chain is 2-oxoglutarate dehydrogenase complex component E1, found in Pongo abelii (Sumatran orangutan).